Here is a 210-residue protein sequence, read N- to C-terminus: MAAETVELHKLKLAELKQECLARGLETKGIKQDLINRLQAYLEDHAEEEANEEDVLGDETEEEEPKPIELPVKEEEPPEKAVDMASEKKVVKITSGIPQTERMQKRAERFNVPVSLESKKAARAARFGISSVPTKGLSSDTKPMVNLDKLKERAQRFGLNVSSISRKSEDDEKLKKRKERFGIVTSSAGTGTTEDTEAKKRKRAERFGIA.

The residue at position 2 (Ala-2) is an N-acetylalanine. An SAP domain is found at 8-42; the sequence is LHKLKLAELKQECLARGLETKGIKQDLINRLQAYL. Lys-10 carries the post-translational modification N6-acetyllysine. A compositionally biased stretch (acidic residues) spans 45 to 64; sequence HAEEEANEEDVLGDETEEEE. A disordered region spans residues 45-87; sequence HAEEEANEEDVLGDETEEEEPKPIELPVKEEEPPEKAVDMASE. Over residues 65-87 the composition is skewed to basic and acidic residues; sequence PKPIELPVKEEEPPEKAVDMASE. Lys-142 carries the N6-acetyllysine modification. Positions 162–210 are disordered; that stretch reads SSISRKSEDDEKLKKRKERFGIVTSSAGTGTTEDTEAKKRKRAERFGIA. A Phosphoserine modification is found at Ser-163. A compositionally biased stretch (polar residues) spans 184-193; that stretch reads VTSSAGTGTT.

It belongs to the SAP domain-containing ribonucleoprotein family. In terms of assembly, interacts with DDX39A. Interacts with FUS. Interacts (via the C-terminal domain) with DDX39B; the interaction is direct and facilitates RNA binding of DDX39B. Component of the transcription/export (TREX) complex at least composed of ALYREF/THOC4, DDX39B, SARNP/CIP29, CHTOP and the THO subcomplex; TREX seems to have dynamic structure involving ATP-dependent remodeling; in the complex interacts directly with DDX39B in a ATP-dependent manner which bridges it to ALYREF/THOC4.

Its subcellular location is the nucleus. The protein localises to the nucleus speckle. Its function is as follows. Binds both single-stranded and double-stranded DNA with higher affinity for the single-stranded form. Specifically binds to scaffold/matrix attachment region DNA. Also binds single-stranded RNA. Enhances RNA unwinding activity of DDX39A. May participate in important transcriptional or translational control of cell growth, metabolism and carcinogenesis. Component of the TREX complex which is thought to couple mRNA transcription, processing and nuclear export, and specifically associates with spliced mRNA and not with unspliced pre-mRNA. The TREX complex is recruited to spliced mRNAs by a transcription-independent mechanism, binds to mRNA upstream of the exon-junction complex (EJC) and is recruited in a splicing- and cap-dependent manner to a region near the 5' end of the mRNA where it functions in mRNA export to the cytoplasm via the TAP/NXF1 pathway. Associates with DDX39B, which facilitates RNA binding of DDX39B and likely plays a role in mRNA export. In Mus musculus (Mouse), this protein is SAP domain-containing ribonucleoprotein (Sarnp).